The following is a 941-amino-acid chain: Bifunctional glutamine synthetase adenylyltransferase/adenylyl-removing enzyme (941 aa).

The interval 1–437 (MSIPTASLSP…TAEFAELLAP (437 aa)) is adenylyl removase. The segment at 444-941 (PDTLADYWRA…FPLGKDEAAL (498 aa)) is adenylyl transferase.

The protein belongs to the GlnE family. Mg(2+) is required as a cofactor.

The catalysed reaction is [glutamine synthetase]-O(4)-(5'-adenylyl)-L-tyrosine + phosphate = [glutamine synthetase]-L-tyrosine + ADP. It catalyses the reaction [glutamine synthetase]-L-tyrosine + ATP = [glutamine synthetase]-O(4)-(5'-adenylyl)-L-tyrosine + diphosphate. Its function is as follows. Involved in the regulation of glutamine synthetase GlnA, a key enzyme in the process to assimilate ammonia. When cellular nitrogen levels are high, the C-terminal adenylyl transferase (AT) inactivates GlnA by covalent transfer of an adenylyl group from ATP to specific tyrosine residue of GlnA, thus reducing its activity. Conversely, when nitrogen levels are low, the N-terminal adenylyl removase (AR) activates GlnA by removing the adenylyl group by phosphorolysis, increasing its activity. The regulatory region of GlnE binds the signal transduction protein PII (GlnB) which indicates the nitrogen status of the cell. This Xanthomonas oryzae pv. oryzae (strain MAFF 311018) protein is Bifunctional glutamine synthetase adenylyltransferase/adenylyl-removing enzyme.